A 1194-amino-acid polypeptide reads, in one-letter code: Probable disease resistance protein RPP1 (1194 aa).

The disordered stretch occupies residues 1–27 (MGSVMSLGCSKRKATNQDVDSESRKRR). Residues 96–260 (WKHDVFPSFH…KISTDVSNML (165 aa)) enclose the TIR domain. 105–110 (HGADVR) provides a ligand contact to NAD(+). Glu-171 is an active-site residue. An NB-ARC domain is found at 280–535 (DMLEQLLRLD…ACLFNGESTT (256 aa)). 14 LRR repeats span residues 623 to 647 (LSNTEEELNISEKVLERVHDFHFVR), 658 to 681 (QLALQDLIYHSPKIRSLNWYGYES), 690 to 713 (PEFLVELDMRSSNLRKLWEGTKQL), 714 to 737 (RNLKWMDLSYSSYLKELPNLSTAT), 739 to 760 (LEELKLRNCSSLVELPSSIEKL), 761 to 784 (TSLQILDLENCSSLEKLPAIENAT), 786 to 807 (LRELKLQNCSSLIELPLSIGTA), 808 to 831 (TNLKQLNISGCSSLVKLPSSIGDI), 832 to 855 (TDLEVFDLSNCSSLVTLPSSIGNL), 866 to 878 (CSKLEALPININL), 879 to 899 (KSLDTLNLTDCSQLKSFPEIS), 900 to 922 (THISELRLKGTAIKEVPLSIMSW), 943 to 965 (FDIITKLHLSKDIQEVPPWVKRM), and 966 to 991 (SRLRDLSLNNCNNLVSLPQLSDSLDY). The disordered stretch occupies residues 1170–1194 (RRSSSPDLSPESSRVSSYDHCLRGD). The segment covering 1171–1185 (RSSSPDLSPESSRVS) has biased composition (low complexity).

This sequence belongs to the disease resistance TIR-NB-LRR family.

It catalyses the reaction NAD(+) + H2O = ADP-D-ribose + nicotinamide + H(+). Its function is as follows. TIR-NB-LRR receptor-like protein that confers resistance to the pathogen Hyaloperonospora arabidopsis. Probably acts as a NAD(+) hydrolase (NADase): in response to activation, catalyzes cleavage of NAD(+) into ADP-D-ribose (ADPR) and nicotinamide; NAD(+) cleavage triggering a defense system that promotes cell death. This chain is Probable disease resistance protein RPP1, found in Arabidopsis thaliana (Mouse-ear cress).